The sequence spans 189 residues: Protein GrpE (189 aa).

Residues 1-38 show a composition bias toward basic and acidic residues; that stretch reads MTKSNETERMEESEETHSSDIRSASESDHASGSDHTES. Positions 1 to 54 are disordered; the sequence is MTKSNETERMEESEETHSSDIRSASESDHASGSDHTESADEIPTADAEQGELEQ.

It belongs to the GrpE family. Homodimer.

The protein resides in the cytoplasm. In terms of biological role, participates actively in the response to hyperosmotic and heat shock by preventing the aggregation of stress-denatured proteins, in association with DnaK and GrpE. It is the nucleotide exchange factor for DnaK and may function as a thermosensor. Unfolded proteins bind initially to DnaJ; upon interaction with the DnaJ-bound protein, DnaK hydrolyzes its bound ATP, resulting in the formation of a stable complex. GrpE releases ADP from DnaK; ATP binding to DnaK triggers the release of the substrate protein, thus completing the reaction cycle. Several rounds of ATP-dependent interactions between DnaJ, DnaK and GrpE are required for fully efficient folding. The sequence is that of Protein GrpE from Tropheryma whipplei (strain Twist) (Whipple's bacillus).